The sequence spans 222 residues: Ribonuclease 3 (222 aa).

The signal sequence occupies residues 1–19; it reads MKFFIFILALQQLYVQSFA. RNA is bound at residue Q30. C36 and C42 are disulfide-bonded. RNA contacts are provided by residues H57, F107, 110–111, and 114–115; these read HE and KH. Residue H57 is the Proton donor of the active site. 3 disulfides stabilise this stretch: C72/C118, C178/C213, and C194/C205. The active site involves E111. H115 (proton acceptor) is an active-site residue.

This sequence belongs to the RNase T2 family.

The enzyme catalyses a ribonucleotidyl-ribonucleotide-RNA + H2O = a 3'-end 3'-phospho-ribonucleotide-RNA + a 5'-end dephospho-ribonucleoside-RNA + H(+). In terms of biological role, may remobilize phosphate, particularly when cells senesce or when phosphate becomes limiting. The protein is Ribonuclease 3 (RNS3) of Arabidopsis thaliana (Mouse-ear cress).